The chain runs to 227 residues: Cytidylate kinase (227 aa).

12 to 20 contributes to the ATP binding site; the sequence is GPSGAGKGT.

This sequence belongs to the cytidylate kinase family. Type 1 subfamily.

It is found in the cytoplasm. The enzyme catalyses CMP + ATP = CDP + ADP. It catalyses the reaction dCMP + ATP = dCDP + ADP. The sequence is that of Cytidylate kinase from Salmonella typhimurium (strain LT2 / SGSC1412 / ATCC 700720).